Consider the following 831-residue polypeptide: MFSFFIRKIFGSKNDRYLKSLSPILDQINALESTMKALSDKEIPVQLATFKQQLQEGKRTIDELLPEVFALVRETSFRVLGMRHFDVQLIGGISLHRGKIAEMKTGEGKTLMATLPVVLNALEGKGVHVVTVNDYLAQRDAEWMGALYSALGLTTGVLTSGLSDDARKEAYAADITYGTNNEFGFDFLRDNMKFYPNQLVQRGHFFAIIDEVDSILIDEARTPLIISGGSEQSTTMYTQIDKIIRNLKPQQDFSIDEKGKVVILSDEGAVQVEKALGIDNMYDPSNIAIQHHVLQALKAHYIFRRDVDYIVKDDQVVIVDEFTGRLMPGRRFSDGLHQALEAKEMVTVAAENQTLASITFQNYFRMYNKLAGMTGTADTEAVEFAQIYGLEVVVIPSNKPMIRKDHSDVIYRTRKEKFDAIVKAIIELHKKGQPVLVGTISIETSELISSMLRKKNISHNVLNAKHHAQEAEIIAQAGQVGKVTIATNMAGRGTDIVLGDSVVELGGLHILGTERHESRRIDNQLRGRAGRQGDPGSSRFYLSLEDDLMRLFGSDKLSGLMQRLGMEEGEPIENIMVSRAIESAQKRVEGHHFEIRKSLLDYDNVMNQQRTVIYTLRHNIMNDPEPMDIILEYLDELLSDIYIELEDNDNNELNKSIHTQLYDIMNLSQVMSIDNTLPTKEQAKTLILSMFEKLKSKAGEAYNDLLRYVLLEELDRCWKDHLRNMDFLREGIGLRGYGQRDPKLEYKKEGFVLFQELLANIREGVFRTFTRLHLEKKEDNFFQHEPINDLWYPASHEKETKFQVKKTDRVGRNDLCPCGSGKKYKKCCGVH.

ATP is bound by residues Gln-88, 106 to 110 (GEGKT), and Asp-495. 4 residues coordinate Zn(2+): Cys-816, Cys-818, Cys-827, and Cys-828.

It belongs to the SecA family. Monomer and homodimer. Part of the essential Sec protein translocation apparatus which comprises SecA, SecYEG and auxiliary proteins SecDF-YajC and YidC. It depends on Zn(2+) as a cofactor.

The protein localises to the cell membrane. It localises to the cytoplasm. It carries out the reaction ATP + H2O + cellular proteinSide 1 = ADP + phosphate + cellular proteinSide 2.. Its function is as follows. Part of the Sec protein translocase complex. Interacts with the SecYEG preprotein conducting channel. Has a central role in coupling the hydrolysis of ATP to the transfer of proteins into and across the cell membrane, serving as an ATP-driven molecular motor driving the stepwise translocation of polypeptide chains across the membrane. The polypeptide is Protein translocase subunit SecA (Lawsonia intracellularis (strain PHE/MN1-00)).